Reading from the N-terminus, the 201-residue chain is Phospholipase A2 inhibitor PIP (201 aa).

Positions 1–19 are cleaved as a signal peptide; it reads MKSLQTICLLFIFIARGTS. Disulfide bonds link Cys-22-Cys-46, Cys-25-Cys-32, Cys-39-Cys-67, Cys-73-Cys-94, Cys-95-Cys-100, Cys-118-Cys-143, Cys-136-Cys-165, and Cys-169-Cys-191. Asn-157 carries an N-linked (GlcNAc...) asparagine glycan.

Homohexamer. In terms of processing, glycosylated. Expressed by the liver.

The protein localises to the secreted. Its function is as follows. Inhibits the enzymatic activity of phospholipase A2 (PA2). Binds to the major PLA2 toxin of D.russelli siamensis (Daboiatoxin, AC Q7T2R1, and AC Q7T3T5) at 1-2-fold molar excess of inhibitor to toxin. It exhibits broad spectra in neutralizing the toxicity of various snake venoms and toxins and inhibits the formation of edema in mice. May bind to PLA2 through its proline-rich hydrophobic core region. This Malayopython reticulatus (Reticulate python) protein is Phospholipase A2 inhibitor PIP.